Here is a 272-residue protein sequence, read N- to C-terminus: NH(3)-dependent NAD(+) synthetase (272 aa).

ATP is bound at residue 45 to 52 (GISGGQDS). Mg(2+) is bound at residue Asp51. A deamido-NAD(+)-binding site is contributed by Arg138. Thr158 is an ATP binding site. Position 163 (Glu163) interacts with Mg(2+). The deamido-NAD(+) site is built by Lys171 and Asp178. The ATP site is built by Lys187 and Thr209. 258-259 (HK) is a binding site for deamido-NAD(+).

This sequence belongs to the NAD synthetase family. In terms of assembly, homodimer.

The enzyme catalyses deamido-NAD(+) + NH4(+) + ATP = AMP + diphosphate + NAD(+) + H(+). The protein operates within cofactor biosynthesis; NAD(+) biosynthesis; NAD(+) from deamido-NAD(+) (ammonia route): step 1/1. Its function is as follows. Catalyzes the ATP-dependent amidation of deamido-NAD to form NAD. Uses ammonia as a nitrogen source. The chain is NH(3)-dependent NAD(+) synthetase from Bacillus cereus (strain AH187).